The primary structure comprises 384 residues: MTPIQNAQQIFNRQHKNLPEITVYAPGRVNIIGEHTDYNDGFVMPCAINFGTAVSGTKRDDHIWNVYAADLDETDEFSLNVEIPKSEHKWANYVRGVVKFIQERYPDFQQGANLVISGNVPLSSGLSSSAALEVAVGKFCQQLGDLPLSHTDIALNGQKAENQFVGANCGNMDQLISALGQENHLLMIDCRSLETTPTPVPQDVAVIIVNSNVPHDLVTGEYNTRRQQCEEAAKFFGVKALRDVSVEQFQKREAELTALSPLAAKRARHVVTENQRVLDAVEALKNNDLTCLGKLMEASHDSMRDDFEITVPQIDYLVELAQLVIGKSGGARMTGGGFGGCIVALAPHDKVDSVRKIIADNYEKTTGLKETFYVCTASQGVRVI.

34–37 is a substrate binding site; that stretch reads EHTD. 123–129 serves as a coordination point for ATP; the sequence is SSGLSSS. 2 residues coordinate Mg(2+): Ser-129 and Glu-161. Asp-173 serves as the catalytic Proton acceptor. Tyr-222 contributes to the substrate binding site.

The protein belongs to the GHMP kinase family. GalK subfamily.

The protein localises to the cytoplasm. It carries out the reaction alpha-D-galactose + ATP = alpha-D-galactose 1-phosphate + ADP + H(+). It functions in the pathway carbohydrate metabolism; galactose metabolism. Catalyzes the transfer of the gamma-phosphate of ATP to D-galactose to form alpha-D-galactose-1-phosphate (Gal-1-P). The sequence is that of Galactokinase from Haemophilus influenzae (strain ATCC 51907 / DSM 11121 / KW20 / Rd).